A 286-amino-acid polypeptide reads, in one-letter code: Beta-lactamase SHV-5 (286 aa).

Residues 1 to 21 (MRYIRLCIISLLATLPLAVHA) form the signal peptide. Ser66 functions as the Acyl-ester intermediate in the catalytic mechanism. A disulfide bridge links Cys73 with Cys119. Glu164 acts as the Proton acceptor in catalysis. 230–232 (KTG) is a substrate binding site.

Belongs to the class-A beta-lactamase family.

The catalysed reaction is a beta-lactam + H2O = a substituted beta-amino acid. SHV enzymes hydrolyze broad spectrum cephalosporins notably cefotaxime and ceftazidime. SHV-5 causes particularly high levels of resistance to aztreonam and ceftazidime. This is Beta-lactamase SHV-5 (bla) from Klebsiella pneumoniae.